The primary structure comprises 379 residues: uncharacterized protein (379 aa).

This is an uncharacterized protein from Acanthamoeba polyphaga (Amoeba).